Here is a 676-residue protein sequence, read N- to C-terminus: Phosphatidylinositol-3,5-bisphosphate 3-phosphatase MTMR6 (676 aa).

The Myotubularin phosphatase domain maps to 125–501 (GWRRLDWNSE…ARFTVWTAMY (377 aa)). 3 residues coordinate a 1,2-diacyl-sn-glycero-3-phospho-(1D-myo-inositol-3,5-bisphosphate): Asn-249, Asn-274, and Ile-275. Residues Asn-249, Asn-274, and Ile-275 each contribute to the a 1,2-diacyl-sn-glycero-3-phospho-(1D-myo-inositol-3-phosphate) site. Residues 249 to 252 (NKVQ), 274 to 275 (NI), and 335 to 341 (CSDGWDR) each bind substrate. Residue Cys-335 is the Phosphocysteine intermediate of the active site. The a 1,2-diacyl-sn-glycero-3-phospho-(1D-myo-inositol-3,5-bisphosphate) site is built by Ser-336, Asp-337, Gly-338, Trp-339, Asp-340, Arg-341, Lys-377, and Arg-381. A 1,2-diacyl-sn-glycero-3-phospho-(1D-myo-inositol-3-phosphate)-binding residues include Ser-336, Asp-337, Gly-338, Trp-339, Asp-340, and Arg-341. Arg-381 provides a ligand contact to a 1,2-diacyl-sn-glycero-3-phospho-(1D-myo-inositol-3-phosphate). Position 381 (Arg-381) interacts with substrate. Residues 618–675 (KWQPLRGADRCSNPACRGEFSSTIERRIHCHLCGMIFCRRCLKVSADERERVCDKCKT) form an FYVE-type zinc finger.

This sequence belongs to the protein-tyrosine phosphatase family. Non-receptor class myotubularin subfamily. Heterodimer with mtm-9. In terms of tissue distribution, expressed in intestinal cells. Expressed in head neurons, pre-anal ganglion, hypodermal cells, anal depressor muscle and non-neuronal cells in the tail.

Its subcellular location is the cytoplasm. It is found in the membrane. The protein localises to the apical cell membrane. The enzyme catalyses a 1,2-diacyl-sn-glycero-3-phospho-(1D-myo-inositol-3,5-bisphosphate) + H2O = a 1,2-diacyl-sn-glycero-3-phospho-(1D-myo-inositol-5-phosphate) + phosphate. It carries out the reaction a 1,2-diacyl-sn-glycero-3-phospho-(1D-myo-inositol-3-phosphate) + H2O = a 1,2-diacyl-sn-glycero-3-phospho-(1D-myo-inositol) + phosphate. It catalyses the reaction 1,2-dioctanoyl-sn-glycero-3-phospho-(1D-myo-inositol-3,5-bisphosphate) + H2O = 1,2-dioctanoyl-sn-glycero-3-phospho-(1D-myo-inositol-5-phosphate) + phosphate. The catalysed reaction is 1,2-dioctanoyl-sn-glycero-3-phospho-(1-D-myo-inositol-3-phosphate) + H2O = 1,2-dioctanoyl-sn-glycero-3-phospho-(1D-myo-inositol) + phosphate. Probable lipid phosphatase that specifically dephosphorylates the D-3 position of phosphatidylinositol 3-phosphate and phosphatidylinositol 3,5-bisphosphate, generating phosphatidylinositol and phosphatidylinositol 5-phosphate. In association with mtm-9, plays a role in endosome trafficking probably by regulating phosphatidylinositol-3-phosphate levels. Regulates fluid phase endocytosis in coelomocytes. Controls the endosomal localization of sorting nexin snx-3 and the levels of sorting receptor mig-14. By regulating the retrograde transport of mig-14, may be involved in the secretion of Wnt ligands such as egl-20. Regulates posterior migration of QL neuroblast descendants and the anterior migration of QR neuroblast descendants and HSN neurons during larval development. Involved in the formation of correct synapse number in DA9 motor neurons probably in part by regulating the secretion of Wnt ligand egl-20. This is Phosphatidylinositol-3,5-bisphosphate 3-phosphatase MTMR6 from Caenorhabditis elegans.